The primary structure comprises 172 residues: Neuropeptide-like protein nlp-8 (172 aa).

Positions 1–26 (MSQKLLPISPLQLLFLQCLLIGFTAA) are cleaved as a signal peptide.

In terms of processing, may be processed by convertase egl-3.

The protein resides in the secreted. Functionally, neuropeptide-like protein. Plays a role in behaviors associated with a sleep-like state induced by stress (SIS), acting in concert with the FARP (FMRFamide related) peptides, flp-13 and flp-24. This Caenorhabditis elegans protein is Neuropeptide-like protein nlp-8.